The following is a 151-amino-acid chain: Coiled-coil-helix-coiled-coil-helix domain-containing protein 2 (151 aa).

Disordered stretches follow at residues Met1–Pro50 and Gly77–Gln111. The span at Ser10–Pro26 shows a compositional bias: low complexity. A compositionally biased stretch (pro residues) spans Arg27 to Ala38. 2 stretches are compositionally biased toward low complexity: residues Pro39–Pro50 and Gln100–Gln111. The 41-residue stretch at Gln111–Ala151 folds into the CHCH domain. Short sequence motifs (cx9C motif) lie at residues Cys114 to Cys124 and Cys134 to Cys144. 2 disulfide bridges follow: Cys114–Cys144 and Cys124–Cys134.

In terms of assembly, interacts with RBPJ.

The protein localises to the nucleus. Its subcellular location is the mitochondrion. It localises to the mitochondrion intermembrane space. In terms of biological role, transcription factor. Binds to the oxygen responsive element of COX4I2 and activates its transcription under hypoxia conditions (4% oxygen), as well as normoxia conditions (20% oxygen). This Homo sapiens (Human) protein is Coiled-coil-helix-coiled-coil-helix domain-containing protein 2 (CHCHD2).